The chain runs to 324 residues: Heparan sulfate 2-O-sulfotransferase hst-2 (324 aa).

At 1–6 the chain is on the cytoplasmic side; sequence MLWKKR. Residues 7–24 traverse the membrane as a helical; Signal-anchor for type II membrane protein segment; that stretch reads KVLYFAGISVFILILLLL. Residues 25 to 324 are Lumenal-facing; that stretch reads KLNSKPKANV…QYHFEKIKPS (300 aa). 2 N-linked (GlcNAc...) asparagine glycosylation sites follow: asparagine 75 and asparagine 94. Catalysis depends on residues histidine 107 and histidine 109. Asparagine 161 carries an N-linked (GlcNAc...) asparagine glycan. Disulfide bonds link cysteine 167–cysteine 175 and cysteine 188–cysteine 194.

This sequence belongs to the sulfotransferase 3 family. Homotrimer. In terms of tissue distribution, present in the hypodermis, muscle, distal tip cells (DTCs) and in neurons (at protein level).

The protein resides in the golgi apparatus membrane. Catalyzes the transfer of sulfate to the C2-position of selected hexuronic acid residues within the maturing heparan sulfate (HS). Involved in cell adhesion and guidance by specifically modifying proteoglycans in the extracellular matrix and on the cell surface that are essential for axon migrations. This Caenorhabditis elegans protein is Heparan sulfate 2-O-sulfotransferase hst-2.